Here is a 346-residue protein sequence, read N- to C-terminus: fMet-Leu-Phe receptor (346 aa).

2 N-linked (GlcNAc...) asparagine glycosylation sites follow: Asn-1 and Asn-7. At 1-24 (NSSLPTNISGGTPAVSAGYLFLDI) the chain is on the extracellular side. Residues 25–47 (ITYLVFAVTFVLGVLGNGLVIWV) form a helical membrane-spanning segment. The Cytoplasmic portion of the chain corresponds to 48-58 (AGFRMRHTVTT). Residues 59–80 (ISYLNLAVADFCFTSTLPFLMV) traverse the membrane as a helical segment. At 81 to 97 (VKVMRGHWPFGWFLCKF) the chain is on the extracellular side. Cys-95 and Cys-173 form a disulfide bridge. The helical transmembrane segment at 98 to 118 (IFTIVDINLFGSVFLIALIAL) threads the bilayer. Residues 119–137 (DRCVCVLHPVWTQNHRTVS) lie on the Cytoplasmic side of the membrane. A helical transmembrane segment spans residues 138 to 159 (LAKKVIIGPWVMALLLTLPVII). The Extracellular segment spans residues 160-202 (RVTTVPGKTGTVACTFDFSPWTNDPVEKLKVTIAMLTVRGIIR). The helical transmembrane segment at 203-223 (FIIGFSVPMSIVAVSYGLIAT) threads the bilayer. The Cytoplasmic segment spans residues 224–239 (KIHKQGLIKSSRPLRV). The helical transmembrane segment at 240–263 (LSFVVAAFFLCWSPYQVVAFIATV) threads the bilayer. The Extracellular segment spans residues 264–282 (RLRNILQGLSKELRIAVDA). The chain crosses the membrane as a helical span at residues 283–302 (TSALAFFNSCLNPMLYVFMG). Topologically, residues 303–346 (QDFRERLIHSLPTSLERALTEDSAQTSDTATNSTLPSAEVPLQA) are cytoplasmic. The interval 321 to 346 (LTEDSAQTSDTATNSTLPSAEVPLQA) is disordered. Residues 324-338 (DSAQTSDTATNSTLP) are compositionally biased toward polar residues.

The protein belongs to the G-protein coupled receptor 1 family. Phosphorylated; which is necessary for desensitization.

It is found in the cell membrane. Its function is as follows. High affinity receptor for N-formyl-methionyl peptides (fMLP), which are powerful neutrophil chemotactic factors. Binding of fMLP to the receptor stimulates intracellular calcium mobilization and superoxide anion release. This response is mediated via a G-protein that activates a phosphatidylinositol-calcium second messenger system. Receptor for TAFA4, mediates its effects on chemoattracting macrophages, promoting phagocytosis and increasing ROS release. Receptor for cathepsin CTSG, leading to increased phagocyte chemotaxis. The sequence is that of fMet-Leu-Phe receptor (FPR1) from Macaca mulatta (Rhesus macaque).